The chain runs to 332 residues: Flotillin-like protein FloA (332 aa).

The helical transmembrane segment at 9–29 (FILIGGGIIFVVLFFHYVPFF) threads the bilayer.

This sequence belongs to the flotillin-like FloA family. As to quaternary structure, homooligomerizes.

It is found in the cell membrane. It localises to the membrane raft. Functionally, found in functional membrane microdomains (FMM) that may be equivalent to eukaryotic membrane rafts. FMMs are highly dynamic and increase in number as cells age. Flotillins are thought to be important factors in membrane fluidity. This Phocaeicola vulgatus (strain ATCC 8482 / DSM 1447 / JCM 5826 / CCUG 4940 / NBRC 14291 / NCTC 11154) (Bacteroides vulgatus) protein is Flotillin-like protein FloA.